Here is a 99-residue protein sequence, read N- to C-terminus: Small integral membrane protein 14 (99 aa).

Residues 1-49 (MAEGGFDPCECVCSHEHAMRRLINLLRQSQSYCTDTECLQELPGPSSDN) lie on the Lumenal side of the membrane. Residues 50–70 (GISITMILMAWMVIAVILFLL) traverse the membrane as a helical segment. Topologically, residues 71–99 (RPPNLRGSNLTGKPASPHNGQDPPAPPVD) are cytoplasmic. Residues 78–99 (SNLTGKPASPHNGQDPPAPPVD) form a disordered region.

It localises to the endoplasmic reticulum membrane. The protein is Small integral membrane protein 14 (SMIM14) of Bos taurus (Bovine).